We begin with the raw amino-acid sequence, 147 residues long: Diuretic hormone 45 (147 aa).

Positions 1–26 are cleaved as a signal peptide; the sequence is MMWWAVWCAAMVAGSVFTAAAPPTDS. The propeptide occupies 27–84; that stretch reads IDLMQMDPSLADDESLGFAMQSLSGRYAAAPWLYLLADVSHDPQRMAEFSQSSGRARP. V131 carries the valine amide modification. A propeptide spanning residues 135–147 is cleaved from the precursor; sequence GAWGEPASYLYNN.

Belongs to the sauvagine/corticotropin-releasing factor/urotensin I family.

The protein resides in the secreted. Its function is as follows. Regulation of fluid secretion. This chain is Diuretic hormone 45 (dh45), found in Bombyx mori (Silk moth).